Reading from the N-terminus, the 1047-residue chain is Error-prone DNA polymerase (1047 aa).

Belongs to the DNA polymerase type-C family. DnaE2 subfamily.

The protein localises to the cytoplasm. It carries out the reaction DNA(n) + a 2'-deoxyribonucleoside 5'-triphosphate = DNA(n+1) + diphosphate. DNA polymerase involved in damage-induced mutagenesis and translesion synthesis (TLS). It is not the major replicative DNA polymerase. In Methylococcus capsulatus (strain ATCC 33009 / NCIMB 11132 / Bath), this protein is Error-prone DNA polymerase.